The chain runs to 719 residues: Protein borderless (719 aa).

Residues 1-33 (MPAKRSRTFRQSGSALLALLAIILLMNISCTSA) form the signal peptide. At 34 to 650 (ARDHRRQTNL…IDVPSQRKVR (617 aa)) the chain is on the extracellular side. Ig-like domains lie at 40–128 (QTNL…CQVS), 134–241 (PSVR…AFLN), 246–334 (AKVI…PVIS), and 341–429 (PIFS…AELM). Cystine bridges form between Cys55-Cys125, Cys172-Cys224, Cys267-Cys318, and Cys363-Cys413. Fibronectin type-III domains follow at residues 434-527 (APRA…TLPS) and 555-646 (APWN…VPSQ). The helical transmembrane segment at 651–671 (ALIIGSSVGVIFLLCALCAFL) threads the bilayer. The Cytoplasmic portion of the chain corresponds to 672-719 (YVKRSCLRHLFAKDSSASEDEDTAESGDCDSDEQDQRDRDSIKIRQST). A disordered region spans residues 685–719 (DSSASEDEDTAESGDCDSDEQDQRDRDSIKIRQST). The segment covering 688–704 (ASEDEDTAESGDCDSDE) has biased composition (acidic residues). A compositionally biased stretch (basic and acidic residues) spans 705 to 719 (QDQRDRDSIKIRQST).

It belongs to the immunoglobulin superfamily. As to quaternary structure, interacts with tutl. As to expression, in the visual system, expressed in lamina and medulla (at protein level).

Its subcellular location is the cell membrane. The protein resides in the cell projection. It localises to the axon. In terms of biological role, in the developing eye, has a role in axonal targeting of the R7 photoreceptor where it functions together with tutl. Probably mediates homotypic cell adhesion; the effect is inhibited by Lar. The chain is Protein borderless from Drosophila melanogaster (Fruit fly).